Reading from the N-terminus, the 484-residue chain is RuvB-like helicase 1 (484 aa).

The span at 1-11 (MSMAASSSTAT) shows a compositional bias: low complexity. Residues 1–27 (MSMAASSSTATVQPSGIITQPPPPSTL) are disordered. Residue 87–94 (GPPGTGKT) coordinates ATP.

This sequence belongs to the RuvB family. May form heterododecamers with RVB2. Component of the SWR1 chromatin remodeling complex, the INO80 chromatin remodeling complex, and of the R2TP complex.

The protein resides in the nucleus. It carries out the reaction ATP + H2O = ADP + phosphate + H(+). Its function is as follows. DNA helicase which participates in several chromatin remodeling complexes, including the SWR1 and the INO80 complexes. The SWR1 complex mediates the ATP-dependent exchange of histone H2A for the H2A variant HZT1 leading to transcriptional regulation of selected genes by chromatin remodeling. The INO80 complex remodels chromatin by shifting nucleosomes and is involved in DNA repair. Also involved in pre-rRNA processing. The chain is RuvB-like helicase 1 (RVB1) from Cryptococcus neoformans var. neoformans serotype D (strain B-3501A) (Filobasidiella neoformans).